Consider the following 78-residue polypeptide: Small ribosomal subunit protein bS16 (78 aa).

The protein belongs to the bacterial ribosomal protein bS16 family.

This is Small ribosomal subunit protein bS16 from Maridesulfovibrio salexigens (strain ATCC 14822 / DSM 2638 / NCIMB 8403 / VKM B-1763) (Desulfovibrio salexigens).